Consider the following 187-residue polypeptide: Adenylate kinase (187 aa).

10 to 15 is an ATP binding site; the sequence is GSGKGT. Residues 30 to 59 form an NMP region; it reads STGDMLRAEIAAGSELGKQAKAVMDAGNLV. AMP-binding positions include Thr31, Arg36, 57–59, 85–88, and Gln92; these read NLV and GYPR. Positions 126 to 136 are LID; the sequence is GRAKEQGRADD. Arg127 contacts ATP. The AMP site is built by Arg133 and Arg144. Gly172 provides a ligand contact to ATP.

The protein belongs to the adenylate kinase family. In terms of assembly, monomer.

The protein localises to the cytoplasm. The enzyme catalyses AMP + ATP = 2 ADP. It functions in the pathway purine metabolism; AMP biosynthesis via salvage pathway; AMP from ADP: step 1/1. Functionally, catalyzes the reversible transfer of the terminal phosphate group between ATP and AMP. Plays an important role in cellular energy homeostasis and in adenine nucleotide metabolism. This Stenotrophomonas maltophilia (strain R551-3) protein is Adenylate kinase.